A 126-amino-acid chain; its full sequence is Small ribosomal subunit protein bS6 (126 aa).

Positions 104–126 are disordered; the sequence is QGAEKGKSSSKKVAAEAEASEEA.

This sequence belongs to the bacterial ribosomal protein bS6 family.

Binds together with bS18 to 16S ribosomal RNA. This chain is Small ribosomal subunit protein bS6, found in Coxiella burnetii (strain Dugway 5J108-111).